The following is a 129-amino-acid chain: Glycine cleavage system H protein (129 aa).

The region spanning 24-106 (IATIGITEFA…YGEGWFLKVR (83 aa)) is the Lipoyl-binding domain. K65 is subject to N6-lipoyllysine.

The protein belongs to the GcvH family. In terms of assembly, the glycine cleavage system is composed of four proteins: P, T, L and H. (R)-lipoate serves as cofactor.

The glycine cleavage system catalyzes the degradation of glycine. The H protein shuttles the methylamine group of glycine from the P protein to the T protein. In Nostoc punctiforme (strain ATCC 29133 / PCC 73102), this protein is Glycine cleavage system H protein.